The following is a 429-amino-acid chain: Ribosomal RNA small subunit methyltransferase B (429 aa).

S-adenosyl-L-methionine-binding positions include 254-260, Asp-277, Asp-303, and Asp-322; that span reads CAAPGGK. Catalysis depends on Cys-375, which acts as the Nucleophile.

It belongs to the class I-like SAM-binding methyltransferase superfamily. RsmB/NOP family.

The protein resides in the cytoplasm. The enzyme catalyses cytidine(967) in 16S rRNA + S-adenosyl-L-methionine = 5-methylcytidine(967) in 16S rRNA + S-adenosyl-L-homocysteine + H(+). Its function is as follows. Specifically methylates the cytosine at position 967 (m5C967) of 16S rRNA. This is Ribosomal RNA small subunit methyltransferase B from Escherichia coli O7:K1 (strain IAI39 / ExPEC).